The following is a 127-amino-acid chain: Cyclin-dependent kinase 2-associated protein 2 (127 aa).

Residues 1 to 47 (MSYKPIAPAPSSTPGSSTPGPGTPVPTAGSVPSPSGSVPGAAAPFRP) form a disordered region. Over residues 9-44 (APSSTPGSSTPGPGTPVPTAGSVPSPSGSVPGAAAP) the composition is skewed to low complexity. Residues 65–107 (PPGSQGSQSTYTDLLSVIEEMGKEIRPTYAGSKSAMERLKRGI) form an interaction with CDK2 region.

Belongs to the CDK2AP family. In terms of assembly, component of the nucleosome remodeling and deacetylase (NuRD) repressor complex, composed of core proteins MTA1, MTA2, MTA3, RBBP4, RBBP7, HDAC1, HDAC2, MBD2, MBD3, and peripherally associated proteins CDK2AP1, CDK2AP2, GATAD2A, GATAD2B, CHD3, CHD4 and CHD5. The exact stoichiometry of the NuRD complex is unknown, and some subunits such as MBD2 and MBD3, GATAD2A and GATAD2B, and CHD3, CHD4 and CHD5 define mutually exclusive NuRD complexes. Interacts with CDK2AP1. Interacts with CDK2. Interacts with MAPK1. Post-translationally, phosphorylated by MAPK1 and CDK2. As to expression, oocytes (at protein level).

The protein resides in the cytoplasm. The protein localises to the nucleus. Functionally, acts as a component of the histone deacetylase NuRD complex which participates in the remodeling of chromatin. Inhibits cell cycle G1/S phase transition by repressing CDK2 expression and activation; represses CDK2 activation by inhibiting its interaction with cyclin E and A. Plays a role in regulating the self-renewal of embryonic stem cells (ESCs) and in maintaining cell survival during terminal differentiation of ESCs. Regulates microtubule organization of metaphase II oocytes. The sequence is that of Cyclin-dependent kinase 2-associated protein 2 (Cdk2ap2) from Mus musculus (Mouse).